Reading from the N-terminus, the 222-residue chain is Large ribosomal subunit protein uL4 (222 aa).

The interval 67–87 (QKGTGNARAGSKRTNVRRGGG) is disordered.

The protein belongs to the universal ribosomal protein uL4 family. As to quaternary structure, part of the 50S ribosomal subunit.

In terms of biological role, one of the primary rRNA binding proteins, this protein initially binds near the 5'-end of the 23S rRNA. It is important during the early stages of 50S assembly. It makes multiple contacts with different domains of the 23S rRNA in the assembled 50S subunit and ribosome. Functionally, forms part of the polypeptide exit tunnel. This is Large ribosomal subunit protein uL4 from Rhodopirellula baltica (strain DSM 10527 / NCIMB 13988 / SH1).